The following is a 320-amino-acid chain: Pyrroline-5-carboxylate reductase 1, mitochondrial (320 aa).

Residue serine 2 is modified to N-acetylserine. Residues isoleucine 6–leucine 11 and serine 34 contribute to the NADP(+) site. Residues alanine 8, glutamine 10, leucine 11, serine 34, aspartate 36, asparagine 56, valine 70, lysine 71, and alanine 97 each coordinate NADPH. NADP(+) contacts are provided by residues asparagine 56, alanine 69–proline 72, and cysteine 95–alanine 97. Glutamate 164 is a binding site for L-proline. Asparagine 230 is an NADPH binding site. Residues alanine 237 and threonine 238 each coordinate L-proline. Serine 278 bears the Phosphoserine mark. The segment at leucine 292–aspartate 320 is disordered.

The protein belongs to the pyrroline-5-carboxylate reductase family. Homodecamer; composed of 5 homodimers. Interacts with LTO1.

It is found in the mitochondrion. The catalysed reaction is L-proline + NADP(+) = (S)-1-pyrroline-5-carboxylate + NADPH + 2 H(+). It carries out the reaction L-proline + NAD(+) = (S)-1-pyrroline-5-carboxylate + NADH + 2 H(+). The protein operates within amino-acid biosynthesis; L-proline biosynthesis; L-proline from L-glutamate 5-semialdehyde: step 1/1. Oxidoreductase that catalyzes the last step in proline biosynthesis, which corresponds to the reduction of pyrroline-5-carboxylate to L-proline using NAD(P)H. At physiologic concentrations, has higher specific activity in the presence of NADH. Involved in the cellular response to oxidative stress. The protein is Pyrroline-5-carboxylate reductase 1, mitochondrial (PYCR1) of Bos taurus (Bovine).